The sequence spans 152 residues: Single-stranded DNA-binding protein, mitochondrial (152 aa).

The transit peptide at 1-16 (MFRRPVLQVFRQFVRH) directs the protein to the mitochondrion. In terms of domain architecture, SSB spans 30–141 (LNRVQLLGRV…IIAGKKLVVH (112 aa)). A phosphoserine mark is found at serine 67 and serine 79. N6-acetyllysine is present on lysine 113. Lysine 122 is subject to N6-succinyllysine.

As to quaternary structure, homotetramer. Interacts with MPG/AAG, through inhibition of its glycosylase activity it potentially prevents formation of DNA breaks in ssDNA, ensuring that base removal primarily occurs in dsDNA. Interacts with POLDIP2. Interacts with PRIMPOL. As to expression, expressed in all the layers of the retina (at protein level).

The protein resides in the mitochondrion. It localises to the mitochondrion matrix. It is found in the mitochondrion nucleoid. Functionally, binds preferentially and cooperatively to pyrimidine rich single-stranded DNA (ss-DNA). In vitro, required to maintain the copy number of mitochondrial DNA (mtDNA) and plays a crucial role during mtDNA replication by stimulating the activity of the replisome components POLG and TWNK at the replication fork. Promotes the activity of the gamma complex polymerase POLG, largely by organizing the template DNA and eliminating secondary structures to favor ss-DNA conformations that facilitate POLG activity. In addition it is able to promote the 5'-3' unwinding activity of the mtDNA helicase TWNK. May also function in mtDNA repair. This is Single-stranded DNA-binding protein, mitochondrial (Ssbp1) from Mus musculus (Mouse).